Here is a 126-residue protein sequence, read N- to C-terminus: uncharacterized protein (126 aa).

The chain crosses the membrane as a helical span at residues 3-23; sequence NMIVLIIFAAFIIYMIASYVY. Residues 39–123 enclose the Rhodanese domain; it reads GYRKAQLIDV…GFKKWGGKIK (85 aa).

The protein resides in the cell membrane. This is an uncharacterized protein from Bacillus subtilis (strain 168).